A 151-amino-acid chain; its full sequence is Small ribosomal subunit protein uS15 (151 aa).

A disordered region spans residues 1–20 (MARLHSGKRGSSGSTRPLRT).

Belongs to the universal ribosomal protein uS15 family. Part of the 30S ribosomal subunit.

This Methanococcus maripaludis (strain C5 / ATCC BAA-1333) protein is Small ribosomal subunit protein uS15.